Reading from the N-terminus, the 85-residue chain is Small ribosomal subunit protein bS20 (85 aa).

The tract at residues 1–24 is disordered; sequence MANIKSAIKRAKLSEERRSHNASI.

The protein belongs to the bacterial ribosomal protein bS20 family.

In terms of biological role, binds directly to 16S ribosomal RNA. The chain is Small ribosomal subunit protein bS20 from Bacillus mycoides (strain KBAB4) (Bacillus weihenstephanensis).